Here is an 874-residue protein sequence, read N- to C-terminus: Alanine--tRNA ligase (874 aa).

Positions 559, 563, 661, and 665 each coordinate Zn(2+).

It belongs to the class-II aminoacyl-tRNA synthetase family. Zn(2+) is required as a cofactor.

It is found in the cytoplasm. The enzyme catalyses tRNA(Ala) + L-alanine + ATP = L-alanyl-tRNA(Ala) + AMP + diphosphate. Functionally, catalyzes the attachment of alanine to tRNA(Ala) in a two-step reaction: alanine is first activated by ATP to form Ala-AMP and then transferred to the acceptor end of tRNA(Ala). Also edits incorrectly charged Ser-tRNA(Ala) and Gly-tRNA(Ala) via its editing domain. The chain is Alanine--tRNA ligase from Microcystis aeruginosa (strain NIES-843 / IAM M-2473).